The sequence spans 348 residues: UPF0324 membrane protein BPP3732 (348 aa).

10 helical membrane passes run 20–39, 43–62, 98–120, 135–157, 164–186, 196–215, 235–257, 267–286, 299–318, and 322–344; these read GILF…DLPF, FGFS…GNFL, IAAV…LLIG, AMLT…EPTL, SAVA…PVIY, QALG…VVGA, VALL…AAGA, VPWF…LDIL, VFVL…FAQI, and GPRV…YGIV.

It belongs to the UPF0324 family.

The protein resides in the cell membrane. In Bordetella parapertussis (strain 12822 / ATCC BAA-587 / NCTC 13253), this protein is UPF0324 membrane protein BPP3732.